The primary structure comprises 3305 residues: Apolipophorins (3305 aa).

The signal sequence occupies residues 1–23 (MGKSNRLLSVLFVISVLWKAAYG). Residues 39–640 (FAAGQKYNYG…SQTSFLPRSV (602 aa)) form the Vitellogenin domain. N-linked (GlcNAc...) asparagine glycosylation is found at Asn643 and Asn2769. The 167-residue stretch at 2733 to 2899 (LRAVVVNGQH…NSYRLSRSCP (167 aa)) folds into the VWFD domain. Cys2757 and Cys2898 are oxidised to a cystine.

Cleaved into 2 chains by furin protease. However, prevention of cleavage does not impair its function. In terms of processing, N-glycosylated.

It is found in the secreted. Constitutes the major component of lipophorin, which mediates transport for various types of lipids in hemolymph. Acts by forming lipoprotein particles that bind lipoproteins and lipids. May be required for morphogens wingless (wg) and hedgehog (hh) function, possibly by acting as vehicles for the movement of wg and hh. This is Apolipophorins from Manduca sexta (Tobacco hawkmoth).